Consider the following 531-residue polypeptide: Probable protein phosphatase 2C 66 (531 aa).

The interval 1–47 is disordered; sequence MGSCLSSDLPPRAGAGAGASPGWPQRWRRRRQRGVERGGAVSGGGGG. Positions 10–25 are enriched in low complexity; it reads PPRAGAGAGASPGWPQ. Positions 88–401 constitute a PPM-type phosphatase domain; that stretch reads AACLHTQQGR…DDCAVVCLFL (314 aa). Mn(2+) contacts are provided by Asp-123 and Gly-124. Positions 151 to 172 are enriched in polar residues; sequence SANEDTSSHQNGSISGSVNSEE. Positions 151–176 are disordered; that stretch reads SANEDTSSHQNGSISGSVNSEESPVV. Mn(2+) is bound by residues Asp-346 and Asp-392.

This sequence belongs to the PP2C family. Mg(2+) is required as a cofactor. Requires Mn(2+) as cofactor.

The enzyme catalyses O-phospho-L-seryl-[protein] + H2O = L-seryl-[protein] + phosphate. The catalysed reaction is O-phospho-L-threonyl-[protein] + H2O = L-threonyl-[protein] + phosphate. The polypeptide is Probable protein phosphatase 2C 66 (Oryza sativa subsp. japonica (Rice)).